The sequence spans 202 residues: Matrix protein (202 aa).

Positions 9–31 are disordered; it reads KNRRDEDTQKSSPASAPLDDDDL. The PPXY motif motif lies at 35–38; the sequence is PPEY. Residues 115–151 are essential for glycoprotein binding; sequence KLRRTFIFQWADSRGPLEGEELEYSQEITWDDDTEFV.

The protein belongs to the lyssavirus matrix protein family. Homomultimer. Interacts with nucleoprotein and with the cytoplasmic domain of glycoprotein. Interacts with host ATP6V1A; this interaction plays an important role in virion uncoating after viral entry.

It localises to the virion membrane. Its subcellular location is the host endomembrane system. The protein localises to the host cytoplasm. Functionally, plays a major role in assembly, budding and uncoating of virion after membrane fusion. Completely covers the ribonucleoprotein coil and keep it in condensed bullet-shaped form. Inhibits viral transcription and stimulates replication. Plays a major role in early induction of TRAIL-mediated apoptosis in infected neurons. Inhibits the integrated stress response (ISR) in the infected cell by blocking the formation of stress granules. The polypeptide is Matrix protein (M) (Rabies virus (strain SAD B19) (RABV)).